The following is a 315-amino-acid chain: tRNA-dihydrouridine(16) synthase (315 aa).

FMN is bound by residues 7-9 (PME) and Gln68. Cys98 serves as the catalytic Proton donor. FMN contacts are provided by residues Lys139, 199–201 (NGE), and 223–224 (GR).

This sequence belongs to the Dus family. DusC subfamily. FMN serves as cofactor.

It catalyses the reaction 5,6-dihydrouridine(16) in tRNA + NADP(+) = uridine(16) in tRNA + NADPH + H(+). It carries out the reaction 5,6-dihydrouridine(16) in tRNA + NAD(+) = uridine(16) in tRNA + NADH + H(+). In terms of biological role, catalyzes the synthesis of 5,6-dihydrouridine (D), a modified base found in the D-loop of most tRNAs, via the reduction of the C5-C6 double bond in target uridines. Specifically modifies U16 in tRNAs. The protein is tRNA-dihydrouridine(16) synthase of Shewanella oneidensis (strain ATCC 700550 / JCM 31522 / CIP 106686 / LMG 19005 / NCIMB 14063 / MR-1).